The following is a 1402-amino-acid chain: DNA-directed RNA polymerase subunit beta' (1402 aa).

Positions 71, 73, 86, and 89 each coordinate Zn(2+). Mg(2+)-binding residues include D462, D464, and D466. The Zn(2+) site is built by C811, C885, C892, and C895. Positions 1379–1402 (RKGTGAGSANQMLQDMTDQVPAAE) are disordered. Residues 1385–1395 (GSANQMLQDMT) are compositionally biased toward polar residues.

This sequence belongs to the RNA polymerase beta' chain family. As to quaternary structure, the RNAP catalytic core consists of 2 alpha, 1 beta, 1 beta' and 1 omega subunit. When a sigma factor is associated with the core the holoenzyme is formed, which can initiate transcription. The cofactor is Mg(2+). Requires Zn(2+) as cofactor.

It carries out the reaction RNA(n) + a ribonucleoside 5'-triphosphate = RNA(n+1) + diphosphate. Its function is as follows. DNA-dependent RNA polymerase catalyzes the transcription of DNA into RNA using the four ribonucleoside triphosphates as substrates. This is DNA-directed RNA polymerase subunit beta' from Agrobacterium fabrum (strain C58 / ATCC 33970) (Agrobacterium tumefaciens (strain C58)).